We begin with the raw amino-acid sequence, 113 residues long: Large ribosomal subunit protein eL30 (113 aa).

Belongs to the eukaryotic ribosomal protein eL30 family.

The chain is Large ribosomal subunit protein eL30 (RpL30) from Spodoptera frugiperda (Fall armyworm).